The following is a 112-amino-acid chain: Integration host factor subunit alpha (112 aa).

The protein belongs to the bacterial histone-like protein family. In terms of assembly, heterodimer of an alpha and a beta chain.

Functionally, this protein is one of the two subunits of integration host factor, a specific DNA-binding protein that functions in genetic recombination as well as in transcriptional and translational control. The sequence is that of Integration host factor subunit alpha from Rhizobium rhizogenes (strain K84 / ATCC BAA-868) (Agrobacterium radiobacter).